A 235-amino-acid polypeptide reads, in one-letter code: MKLWDILATCLLLLSSVSTRPLFHKLQPSKRAVVRSESPALDPIIDSQPETSNPKQASMEEQYDLTGLYPEQFEDVMDFIEATLGRLRRSSDVEPQMKRDRVRQKAAANTEKSGGRGRGERKRSRGRARSRDDRVKGQGRGCLLKEIHLNVTDLDLGYRTKEELIFRYCSGPCHDAETNYDKILNNLTHNKKLDKDTPSRTCCRPIAFDDDISFLDDSLEYHTLKKHSAKKCACV.

The first 19 residues, 1-19 (MKLWDILATCLLLLSSVST), serve as a signal peptide directing secretion. Positions 20 to 87 (RPLFHKLQPS…DFIEATLGRL (68 aa)) are excised as a propeptide. Disordered stretches follow at residues 34-60 (VRSE…ASME) and 91-137 (SDVE…RVKG). The segment covering 119-128 (GERKRSRGRA) has biased composition (basic residues). 3 disulfides stabilise this stretch: Cys142–Cys203, Cys169–Cys232, and Cys173–Cys234. N-linked (GlcNAc...) asparagine glycans are attached at residues Asn150 and Asn186.

Belongs to the TGF-beta family. GDNF subfamily. Homodimer; disulfide-linked. Interacts with GFRA1 coreceptor and RET: forms a 2:2:2 ternary complex composed of GDNF ligand, GFRA1 and RET receptor. In terms of tissue distribution, first expressed at 14 hours post-fertilization (hpf) in the ventral half of anterior somites and in intermediate mesoderm. Ventral somitic expression persists and extends more posteriorly over the next 12 hours. Expressed throughout the ventral trunk mesoderm and endoderm at 24 hpf. By 30 hpf, somitic expression ceases and by 36 hpf, expression becomes restricted to the endodermal cells forming the gut, with expression along the whole length of the developing gut tube at 72 hpf.

It is found in the secreted. Its function is as follows. Neurotrophic factor that enhances survival and morphological differentiation of dopaminergic neurons and increases their high-affinity dopamine uptake. Acts by binding to its coreceptor, GFRA1, leading to autophosphorylation and activation of the RET receptor. The sequence is that of Glial cell line-derived neurotrophic factor from Danio rerio (Zebrafish).